The following is a 196-amino-acid chain: Probable malonic semialdehyde reductase RutE (196 aa).

Belongs to the nitroreductase family. HadB/RutE subfamily. Requires FMN as cofactor.

The enzyme catalyses 3-hydroxypropanoate + NADP(+) = 3-oxopropanoate + NADPH + H(+). Its function is as follows. May reduce toxic product malonic semialdehyde to 3-hydroxypropionic acid, which is excreted. The polypeptide is Probable malonic semialdehyde reductase RutE (Escherichia coli (strain SMS-3-5 / SECEC)).